The following is a 154-amino-acid chain: Transcriptional repressor NrdR (154 aa).

A disordered region spans residues 1-22 (MECPNCHKNASRVIDSRPSDEN). The segment at 3-34 (CPNCHKNASRVIDSRPSDENRAIRRRRECENC) is a zinc-finger region. The region spanning 49–139 (LLVVKNDGTR…IYRQFKDVSG (91 aa)) is the ATP-cone domain.

This sequence belongs to the NrdR family. Zn(2+) serves as cofactor.

Functionally, negatively regulates transcription of bacterial ribonucleotide reductase nrd genes and operons by binding to NrdR-boxes. The chain is Transcriptional repressor NrdR from Lactobacillus johnsonii (strain CNCM I-12250 / La1 / NCC 533).